We begin with the raw amino-acid sequence, 948 residues long: UvrABC system protein A (948 aa).

33 to 40 (GLSGSGKS) contacts ATP. The segment at 252–279 (CPICGFSIGELEPRMFSFNSPFGACPTC) adopts a C4-type zinc-finger fold. 2 consecutive ABC transporter domains span residues 309-587 (WIPT…KKSL) and 607-935 (ASDR…KYLK). 639–646 (GVSGSGKS) provides a ligand contact to ATP. The segment at 738–764 (CEACKGDGIIKIEMHFLPDVYVPCEVC) adopts a C4-type zinc-finger fold.

This sequence belongs to the ABC transporter superfamily. UvrA family. As to quaternary structure, forms a heterotetramer with UvrB during the search for lesions.

The protein localises to the cytoplasm. Functionally, the UvrABC repair system catalyzes the recognition and processing of DNA lesions. UvrA is an ATPase and a DNA-binding protein. A damage recognition complex composed of 2 UvrA and 2 UvrB subunits scans DNA for abnormalities. When the presence of a lesion has been verified by UvrB, the UvrA molecules dissociate. This Staphylococcus aureus (strain MRSA252) protein is UvrABC system protein A.